A 565-amino-acid chain; its full sequence is Urocanate hydratase (565 aa).

NAD(+) contacts are provided by residues 61–62 (GG), Gln-139, 185–187 (GMG), Glu-205, Arg-210, 251–252 (NA), 272–276 (QTSAH), 282–283 (YL), and Tyr-331. Cys-419 is a catalytic residue. Residues 453 to 472 (LDSGSVASPNRETESMRDGS) form a disordered region. The span at 463-472 (RETESMRDGS) shows a compositional bias: basic and acidic residues. Gly-501 is a binding site for NAD(+).

It belongs to the urocanase family. The cofactor is NAD(+).

The protein localises to the cytoplasm. The catalysed reaction is 4-imidazolone-5-propanoate = trans-urocanate + H2O. It functions in the pathway amino-acid degradation; L-histidine degradation into L-glutamate; N-formimidoyl-L-glutamate from L-histidine: step 2/3. In terms of biological role, catalyzes the conversion of urocanate to 4-imidazolone-5-propionate. The polypeptide is Urocanate hydratase (Pseudomonas syringae pv. syringae (strain B728a)).